Here is a 375-residue protein sequence, read N- to C-terminus: CLIP domain-containing serine protease B14 (375 aa).

Positions 1–24 (MYSRRYVACGLLCLLVIAIDQGHG) are cleaved as a signal peptide. The 55-residue stretch at 29–83 (PCTTPNGTAGRCVRVRECGYVLDLLRKDLFAHSDTVHLEGLQCGTRPDGGALVCC) folds into the Clip domain. 3 disulfide bridges follow: Cys30/Cys82, Cys40/Cys71, and Cys46/Cys83. N-linked (GlcNAc...) asparagine glycosylation is present at Asn34. The 270-residue stretch at 101–370 (IIGGNDTELG…YMGWLEREMF (270 aa)) folds into the Peptidase S1 domain. Residue Asn105 is glycosylated (N-linked (GlcNAc...) asparagine). Cys131 and Cys147 are joined by a disulfide. Active-site charge relay system residues include His146 and Asp213. Asn238 carries N-linked (GlcNAc...) asparagine glycosylation. Disulfide bonds link Cys289–Cys307 and Cys317–Cys346. Ser321 serves as the catalytic Charge relay system. N-linked (GlcNAc...) asparagine glycosylation is present at Asn357.

Belongs to the peptidase S1 family. CLIP subfamily. Post-translationally, N-glycosylated. Proteolytically cleaved. In terms of tissue distribution, expressed by a subpopulation of hemocytes.

Its subcellular location is the secreted. Serine protease. Plays a role in innate immunity against infections by parasite P.berghei and by Gram-negative bacteria such as E.coli. In response to P.berghei infection, contributes to the clearing of parasite ookinetes independent of melanization, an innate immune response which consists in the deposition of melanin pigments on invading pathogens and parasites. May play a role in non-septic wound healing. The sequence is that of CLIP domain-containing serine protease B14 from Anopheles gambiae (African malaria mosquito).